Here is a 930-residue protein sequence, read N- to C-terminus: Carnosine synthase 1 (930 aa).

Positions 1–24 (MISVDRLSEEQALGMKEQEWAGPE) are disordered. The region spanning 624–825 (RPPPAAFSVP…LLLAAVLLAL (202 aa)) is the ATP-grasp domain. Residue 650-716 (VPFPAVAKLE…MEYVPGTEHD (67 aa)) participates in ATP binding. Residues E782, E794, and N796 each contribute to the Mg(2+) site. Residues E782, E794, and N796 each coordinate Mn(2+).

In terms of assembly, homotetramer. The cofactor is Mg(2+). Requires Mn(2+) as cofactor.

The catalysed reaction is beta-alanine + L-histidine + ATP = carnosine + ADP + phosphate + H(+). The enzyme catalyses 4-aminobutanoate + L-histidine + ATP = L-homocarnosine + ADP + phosphate + H(+). Its function is as follows. Catalyzes the synthesis of carnosine and homocarnosine. Carnosine is synthesized more efficiently than homocarnosine. This is Carnosine synthase 1 from Gallus gallus (Chicken).